The following is a 374-amino-acid chain: Golgi-associated kinase 1B (374 aa).

The Cytoplasmic segment spans residues 1–38; the sequence is MSPDRTGRGSSSSSSSLKRLVCKSFVRAWGRRRPNLRR. Residues 39–61 form a helical; Signal-anchor for type II membrane protein membrane-spanning segment; it reads AVLLICTASAIYGIVIASQVLRG. Topologically, residues 62–374 are extracellular; it reads STHPGKALRK…LLQVYTRLDR (313 aa). Positions 136–146 are enriched in basic residues; it reads VRPKKRRKYGA. The tract at residues 136-177 is disordered; sequence VRPKKRRKYGARRPGVVQDTESKKDTLWSKVPNSQHKSQAQS. The segment covering 166 to 177 has biased composition (polar residues); it reads VPNSQHKSQAQS. 2 N-linked (GlcNAc...) asparagine glycosylation sites follow: asparagine 281 and asparagine 314.

It belongs to the GASK family.

Its subcellular location is the golgi apparatus membrane. The protein is Golgi-associated kinase 1B of Xenopus laevis (African clawed frog).